The sequence spans 249 residues: MEMGRRIHLELRNRTPSDVKELVLDNCRSIEGKIEGLTDEFEELEFLSTINVGLTSVANLPKLNKLKKLELSDNRISGGLEVLAEKCPNLTHLNLSGNKIKDLSTIEPLKKLENLKSLDLFNCEVTNLNDYRENVFKLLPQLTYLDGYDRDDKEAPDSDAEGYVEGLDDDEEDEDEEEYDEDAQVVEDEEDEEEEEEGEEEDVSGEEEEDEEGYNDGEVDDEEDEEDVGEEERGQKRKREPXDXGEDDD.

Thr-15 carries the post-translational modification Phosphothreonine. Position 17 is a phosphoserine (Ser-17). LRR repeat units follow at residues Asp-18–Phe-41, Glu-43–Asn-64, Lys-65–Cys-87, and Asn-89–Lys-110. Positions Cys-123–Glu-161 constitute an LRRCT domain. The span at Gly-147–Pro-156 shows a compositional bias: basic and acidic residues. The interval Gly-147–Asp-249 is disordered. The necessary for tumor-suppressive function stretch occupies residues Arg-150–Glu-174. The span at Asp-157 to Glu-230 shows a compositional bias: acidic residues. Ser-158 and Ser-204 each carry phosphoserine. Residues Glu-165–Asp-249 are interaction with E4F1.

Belongs to the ANP32 family. Component of the SET complex, composed of at least ANP32A, APEX1, HMGB2, NME1, SET and TREX1. Directly interacts with SET. Interacts with ATXN1/SCA1. Interacts with MAP1B. Interacts with ELAVL1. Part of the INHAT (inhibitor of histone acetyltransferases) complex. Interacts with E4F1. Phosphorylated on serine residues, at least in part by casein kinase 2/CK2. In terms of processing, some glutamate residues are glycylated by TTLL8. This modification occurs exclusively on glutamate residues and results in a glycine chain on the gamma-carboxyl group.

The protein resides in the nucleus. Its subcellular location is the cytoplasm. It is found in the endoplasmic reticulum. Functionally, multifunctional protein that is involved in the regulation of many processes including tumor suppression, apoptosis, cell cycle progression or transcription. Promotes apoptosis by favouring the activation of caspase-9/CASP9 and allowing apoptosome formation. In addition, plays a role in the modulation of histone acetylation and transcription as part of the INHAT (inhibitor of histone acetyltransferases) complex. Inhibits the histone-acetyltranferase activity of EP300/CREBBP (CREB-binding protein) and EP300/CREBBP-associated factor by histone masking. Preferentially binds to unmodified histone H3 and sterically inhibiting its acetylation and phosphorylation leading to cell growth inhibition. Participates in other biochemical processes such as regulation of mRNA nuclear-to-cytoplasmic translocation and stability by its association with ELAVL1 (Hu-antigen R). Plays a role in E4F1-mediated transcriptional repression as well as inhibition of protein phosphatase 2A. This Canis lupus familiaris (Dog) protein is Acidic leucine-rich nuclear phosphoprotein 32 family member A (ANP32A).